The sequence spans 224 residues: Peroxiredoxin-6 (224 aa).

Residues 5 to 169 (LLLGDEAPNF…ILRVVISLQL (165 aa)) form the Thioredoxin domain. The tract at residues 31-40 (DSWGILFSHP) is required and sufficient for targeting to lysosomes and lamellar bodies. Phosphothreonine is present on Thr-44. Residue Cys-47 is the Cysteine sulfenic acid (-SOH) intermediate; for peroxidase activity of the active site. At Lys-63 the chain carries N6-acetyllysine. The residue at position 89 (Tyr-89) is a Phosphotyrosine. Asp-140 functions as the For phospholipase activity in the catalytic mechanism. A Phosphothreonine; by MAPK modification is found at Thr-177. Residue Lys-209 is modified to N6-acetyllysine; alternate. Lys-209 bears the N6-succinyllysine; alternate mark.

This sequence belongs to the peroxiredoxin family. Prx6 subfamily. Homodimer. Interacts with GSTP1; mediates PRDX6 glutathionylation and regeneration. Interacts with APEX1. Interacts with STH. May interact with FAM168B. May interact with HTR2A. In terms of processing, irreversibly inactivated by overoxidation of Cys-47 to sulfinic acid (Cys-SO(2)H) and sulfonic acid (Cys-SO(3)H) forms upon oxidative stress. Phosphorylation at Thr-177 by MAP kinases increases the phospholipase activity of the enzyme. The phosphorylated form exhibits a greater lysophosphatidylcholine acyltransferase activity compared to the non-phosphorylated form.

The protein localises to the cytoplasm. It is found in the lysosome. The catalysed reaction is a hydroperoxide + 2 glutathione = an alcohol + glutathione disulfide + H2O. It carries out the reaction a 1,2-diacyl-sn-glycero-3-phosphocholine + H2O = a 1-acyl-sn-glycero-3-phosphocholine + a fatty acid + H(+). It catalyses the reaction a 1-acyl-sn-glycero-3-phosphocholine + an acyl-CoA = a 1,2-diacyl-sn-glycero-3-phosphocholine + CoA. The enzyme catalyses 1-hexadecanoyl-sn-glycero-3-phosphocholine + hexadecanoyl-CoA = 1,2-dihexadecanoyl-sn-glycero-3-phosphocholine + CoA. The catalysed reaction is 1,2-dihexadecanoyl-sn-glycero-3-phosphocholine + H2O = 1-hexadecanoyl-sn-glycero-3-phosphocholine + hexadecanoate + H(+). Thiol-specific peroxidase that catalyzes the reduction of hydrogen peroxide and organic hydroperoxides to water and alcohols, respectively. Can reduce H(2)O(2) and short chain organic, fatty acid, and phospholipid hydroperoxides. Also has phospholipase activity, and can therefore either reduce the oxidized sn-2 fatty acyl group of phospholipids (peroxidase activity) or hydrolyze the sn-2 ester bond of phospholipids (phospholipase activity). These activities are dependent on binding to phospholipids at acidic pH and to oxidized phospholipds at cytosolic pH. Plays a role in cell protection against oxidative stress by detoxifying peroxides and in phospholipid homeostasis. Exhibits acyl-CoA-dependent lysophospholipid acyltransferase which mediates the conversion of lysophosphatidylcholine (1-acyl-sn-glycero-3-phosphocholine or LPC) into phosphatidylcholine (1,2-diacyl-sn-glycero-3-phosphocholine or PC). Shows a clear preference for LPC as the lysophospholipid and for palmitoyl CoA as the fatty acyl substrate. The protein is Peroxiredoxin-6 (PRDX6) of Macaca fascicularis (Crab-eating macaque).